Here is a 518-residue protein sequence, read N- to C-terminus: Envelope protein (518 aa).

Residues 1 to 31 (MSVNRSSIKSLLMVFMIVSSSLLAPVGGAAA) form the signal peptide. At 32 to 485 (DEFRTPAASD…IEDREPEAGG (454 aa)) the chain is on the extracellular side. A glycan (N-linked (GlcNAc...) (hybrid) asparagine; by host) is linked at N213. The chain crosses the membrane as a helical span at residues 486 to 506 (FFGSGSTDTMLVGLLALAGVL). The Cytoplasmic portion of the chain corresponds to 507–518 (LLAQSNNRGGRR).

In terms of processing, N-glycosylated by a pentasaccharide comprising glucose, glucuronic acid and a terminal 5-N-formyl-legionaminic acid residue.

The protein resides in the virion membrane. In terms of biological role, envelope protein that may play a role in host-cell attachment and viral genome entry. The chain is Envelope protein from Halorubrum sp. PV6 (HRPV-1).